A 365-amino-acid chain; its full sequence is Cobalt-precorrin-5B C(1)-methyltransferase (365 aa).

This sequence belongs to the CbiD family.

It carries out the reaction Co-precorrin-5B + S-adenosyl-L-methionine = Co-precorrin-6A + S-adenosyl-L-homocysteine. It participates in cofactor biosynthesis; adenosylcobalamin biosynthesis; cob(II)yrinate a,c-diamide from sirohydrochlorin (anaerobic route): step 6/10. Functionally, catalyzes the methylation of C-1 in cobalt-precorrin-5B to form cobalt-precorrin-6A. In Polaromonas naphthalenivorans (strain CJ2), this protein is Cobalt-precorrin-5B C(1)-methyltransferase.